Consider the following 281-residue polypeptide: Radiation response metalloprotease IrrE (281 aa).

His-82 provides a ligand contact to Zn(2+). Glu-83 is an active-site residue. Residues His-86 and Glu-113 each contribute to the Zn(2+) site. The tract at residues 262-281 (LPAGRSEPDADKPEAPGDQS) is disordered. Residues 267–281 (SEPDADKPEAPGDQS) are compositionally biased toward basic and acidic residues.

In terms of assembly, interacts with DdrOC.

Protease activity is inhibited by EDTA. In terms of biological role, plays a central regulatory role in DNA repair and protection pathways in response to radiation stress. Acts as a site-specific metalloprotease that cleaves and inactivates the repressor proteins DdrOC and DdrOP3, resulting in induced expression of genes required for DNA repair and cell survival after exposure to radiation. The polypeptide is Radiation response metalloprotease IrrE (Deinococcus deserti (strain DSM 17065 / CIP 109153 / LMG 22923 / VCD115)).